Consider the following 66-residue polypeptide: Ocellatin-PT4 (66 aa).

An N-terminal signal peptide occupies residues 1–22; sequence MAFLKKSLFLVLFLGLVSLSIC. A propeptide spanning residues 23 to 39 is cleaved from the precursor; sequence DEEKRQDEDDDDDDDEE. Residue V66 is modified to Valine amide.

In terms of tissue distribution, expressed by the skin glands.

Its subcellular location is the secreted. Has antibacterial activity against Gram-negative bacteria E.coli ATCC 25922 (MIC=80 uM), K.pneumoniae ATCC 700603 (MIC=310 uM) and S.choleraesuis ATCC 14028 (MIC=310 uM). Shows no hemolytic activity and no cytotoxicity. This is Ocellatin-PT4 from Leptodactylus pustulatus (Ceara white-lipped frog).